We begin with the raw amino-acid sequence, 307 residues long: Olfactory receptor 12D2 (307 aa).

Residues 1-23 (MLNTTSVTEFLLLGVTDIQELQP) lie on the Extracellular side of the membrane. Asn-3 carries an N-linked (GlcNAc...) asparagine glycan. A helical membrane pass occupies residues 24 to 44 (FLFVVFLTIYFISVTGNGAVL). Residues 45-52 (MIVISDPR) lie on the Cytoplasmic side of the membrane. A helical transmembrane segment spans residues 53 to 73 (LHSLMYFFLGNLSYLDICYST). Over 74-97 (VTLPKMLQNFLSTHKAISFLGCIS) the chain is Extracellular. An intrachain disulfide couples Cys-95 to Cys-187. The helical transmembrane segment at 98–118 (QLHFFHSLGSTESMLFAVMAF) threads the bilayer. Residues 119-137 (DLSVAICKPLRYTVIMNPQ) are Cytoplasmic-facing. Residues 138–158 (LCTQMAITIWVIGFFHALLHS) traverse the membrane as a helical segment. At 159–195 (VMTSRLNFCGSNRIHHFLCDIKPLLKLACGNTELNQW) the chain is on the extracellular side. The helical transmembrane segment at 196–215 (LLSTVTGTIAMGPFFLTLLS) threads the bilayer. The Cytoplasmic segment spans residues 216–236 (YFYIITYLFFKTRSCSMLCKA). Residues 237–257 (LSTCASHFMVVILFYAPVLFT) form a helical membrane-spanning segment. Residues 258 to 270 (YIHPALESFMDQD) lie on the Extracellular side of the membrane. A helical membrane pass occupies residues 271 to 291 (RIVAIMYTVVTPVLNPLIYTL). Over 292 to 307 (RNKEVKGALGRVIRRL) the chain is Cytoplasmic.

The protein belongs to the G-protein coupled receptor 1 family.

The protein localises to the cell membrane. Its function is as follows. Odorant receptor. The polypeptide is Olfactory receptor 12D2 (OR12D2) (Homo sapiens (Human)).